The following is a 358-amino-acid chain: tRNA-specific 2-thiouridylase MnmA (358 aa).

ATP contacts are provided by residues 6-13 and Met-32; that span reads ALSGGVDS. Cys-103 serves as the catalytic Nucleophile. The cysteines at positions 103 and 201 are disulfide-linked. Gly-127 contributes to the ATP binding site. Residues 151–153 form an interaction with tRNA region; it reads KDQ. The active-site Cysteine persulfide intermediate is Cys-201.

It belongs to the MnmA/TRMU family.

The protein resides in the cytoplasm. It carries out the reaction S-sulfanyl-L-cysteinyl-[protein] + uridine(34) in tRNA + AH2 + ATP = 2-thiouridine(34) in tRNA + L-cysteinyl-[protein] + A + AMP + diphosphate + H(+). In terms of biological role, catalyzes the 2-thiolation of uridine at the wobble position (U34) of tRNA, leading to the formation of s(2)U34. This chain is tRNA-specific 2-thiouridylase MnmA, found in Thermotoga sp. (strain RQ2).